The primary structure comprises 425 residues: Serine--tRNA ligase (425 aa).

233–235 is an L-serine binding site; it reads TAE. 264–266 is an ATP binding site; the sequence is RRE. Residue Glu287 coordinates L-serine. ATP is bound at residue 351-354; sequence EISS. Ser385 is a binding site for L-serine.

The protein belongs to the class-II aminoacyl-tRNA synthetase family. Type-1 seryl-tRNA synthetase subfamily. Homodimer. The tRNA molecule binds across the dimer.

Its subcellular location is the cytoplasm. The enzyme catalyses tRNA(Ser) + L-serine + ATP = L-seryl-tRNA(Ser) + AMP + diphosphate + H(+). The catalysed reaction is tRNA(Sec) + L-serine + ATP = L-seryl-tRNA(Sec) + AMP + diphosphate + H(+). Its pathway is aminoacyl-tRNA biosynthesis; selenocysteinyl-tRNA(Sec) biosynthesis; L-seryl-tRNA(Sec) from L-serine and tRNA(Sec): step 1/1. Its function is as follows. Catalyzes the attachment of serine to tRNA(Ser). Is also able to aminoacylate tRNA(Sec) with serine, to form the misacylated tRNA L-seryl-tRNA(Sec), which will be further converted into selenocysteinyl-tRNA(Sec). In Parasynechococcus marenigrum (strain WH8102), this protein is Serine--tRNA ligase.